A 97-amino-acid polypeptide reads, in one-letter code: Sec-independent protein translocase protein TatA (97 aa).

A helical transmembrane segment spans residues 1–21 (MGFNIWSLLIILLIVALLFGT). Positions 28–97 (GGDLGGAIRG…SAEHHDRSTS (70 aa)) are disordered. Positions 37 to 56 (GFKESMREGEEEEAQKRADG) are enriched in basic and acidic residues. The segment covering 78–87 (QARESSSARQ) has biased composition (low complexity). A compositionally biased stretch (basic and acidic residues) spans 88 to 97 (SAEHHDRSTS).

It belongs to the TatA/E family. In terms of assembly, the Tat system comprises two distinct complexes: a TatABC complex, containing multiple copies of TatA, TatB and TatC subunits, and a separate TatA complex, containing only TatA subunits. Substrates initially bind to the TatABC complex, which probably triggers association of the separate TatA complex to form the active translocon.

It is found in the cell inner membrane. Its function is as follows. Part of the twin-arginine translocation (Tat) system that transports large folded proteins containing a characteristic twin-arginine motif in their signal peptide across membranes. TatA could form the protein-conducting channel of the Tat system. The protein is Sec-independent protein translocase protein TatA of Halorhodospira halophila (strain DSM 244 / SL1) (Ectothiorhodospira halophila (strain DSM 244 / SL1)).